We begin with the raw amino-acid sequence, 470 residues long: AAA-ATPase At5g17730 (470 aa).

An N-terminal signal peptide occupies residues 1 to 18; sequence MFSLRNLPSLAPFVSAYA. 252–259 lines the ATP pocket; it reads GPPGTGKT.

This sequence belongs to the AAA ATPase family. BCS1 subfamily. Mg(2+) is required as a cofactor.

It carries out the reaction ATP + H2O = ADP + phosphate + H(+). The polypeptide is AAA-ATPase At5g17730 (Arabidopsis thaliana (Mouse-ear cress)).